Consider the following 573-residue polypeptide: MRLTVGQVHRHVLALASSRSCFVLGDHLPFRMLSLPRVVRFHQTAWHDIQTVEDKSGPLTLASLEVQNKVEYVKKERATRTGGIKPSSRASALNMKPKVSSFNAKPVKSALPKSAVLKKTLKIDESLFSAKSFEELGLPPLLIDRLNKEGLTAPTEVQSAAIPIISQKHDAVIQSYTGSGKTLAYLLPILSEIGPLKRPTEQDSSDKRSGVEAVIVAPSRELGMQIVREVEKILGPNDKRLVQQLVGGANRSRQEEALKKNKPIIVVGTPGRISEISAAGKLHTHSCRFLVLDEVDQLLSFNYREDMHRILEHVGRKSGTSSRDILGPLARRSERQTILVSATIPFSVIRAARSWGHDPVLVRAMSVVPLESITVPRPVLSQPDANSNSPSNSVNQAAVDSLPPSLEHYYCTSKAQHKVDTLRRCIHALEAQTVIAFMNNTKPLKDVVFKLEARGMKATELHGDLGKLARSTVLKKFKDGEFRVLVTNELSARGLDVPECDLVINLDLPTDSTHYAHRAGRTGRLGRKGTVVTICEETETFVVRKMRKQLAVPIKPCEFTEGKLLVHKEEDVE.

Positions 131-159 (KSFEELGLPPLLIDRLNKEGLTAPTEVQS) match the Q motif motif. Positions 162-362 (IPIISQKHDA…RSWGHDPVLV (201 aa)) constitute a Helicase ATP-binding domain. 175–182 (SYTGSGKT) is a binding site for ATP. The DEAD box motif lies at 293–296 (DEVD). Residues 421-565 (TLRRCIHALE…PCEFTEGKLL (145 aa)) form the Helicase C-terminal domain.

It belongs to the DEAD box helicase family.

It catalyses the reaction ATP + H2O = ADP + phosphate + H(+). The polypeptide is DEAD-box ATP-dependent RNA helicase 47A (Oryza sativa subsp. japonica (Rice)).